The following is a 371-amino-acid chain: LIM domain-binding protein 2 (371 aa).

Disordered regions lie at residues 244-289 (APPA…AAAN) and 325-371 (QYDA…QASQ). Over residues 263-289 (STSSTSNSSAGNNANSTNSKKKSAAAN) the composition is skewed to low complexity. One can recognise an LIM interaction domain (LID) domain in the interval 296-335 (DVMVVGEPTLMGGEFGDEDERLITRLENTQYDAANGMDDE). Polar residues predominate over residues 339–371 (NNSPALGNNSPWNSKPPANQETKSENPTPQASQ).

The protein belongs to the LDB family. In terms of tissue distribution, first expressed at stages 15-16 in presumptive limb mesoderm. As limb outgrowth proceeds, expressed in the entire limb bud, concentrating in the distal mesoderm throughout limb development. Both hindlimbs and forelimbs exhibit similar expression patterns.

It localises to the nucleus. In terms of biological role, binds to the LIM domain of a wide variety of LIM domain-containing transcription factors. The chain is LIM domain-binding protein 2 (LDB2) from Gallus gallus (Chicken).